Consider the following 89-residue polypeptide: Small ribosomal subunit protein uS15 (89 aa).

Belongs to the universal ribosomal protein uS15 family. As to quaternary structure, part of the 30S ribosomal subunit. Forms a bridge to the 50S subunit in the 70S ribosome, contacting the 23S rRNA.

One of the primary rRNA binding proteins, it binds directly to 16S rRNA where it helps nucleate assembly of the platform of the 30S subunit by binding and bridging several RNA helices of the 16S rRNA. In terms of biological role, forms an intersubunit bridge (bridge B4) with the 23S rRNA of the 50S subunit in the ribosome. The chain is Small ribosomal subunit protein uS15 from Shewanella denitrificans (strain OS217 / ATCC BAA-1090 / DSM 15013).